A 298-amino-acid chain; its full sequence is Serine/threonine-protein kinase 1 (298 aa).

The 239-residue stretch at 38 to 276 folds into the Protein kinase domain; that stretch reads FIATRPMFEG…FKSLVSHPWF (239 aa). Residues 45 to 53 and Lys65 contribute to the ATP site; that span reads FEGGRNNVF. Asp152 (proton acceptor) is an active-site residue.

Belongs to the protein kinase superfamily. Ser/Thr protein kinase family.

The protein localises to the virion. Its subcellular location is the host cytoplasm. It carries out the reaction L-seryl-[protein] + ATP = O-phospho-L-seryl-[protein] + ADP + H(+). The catalysed reaction is L-threonyl-[protein] + ATP = O-phospho-L-threonyl-[protein] + ADP + H(+). Essential for viral replication. It may mediate the virus progression through DNA replication. This chain is Serine/threonine-protein kinase 1, found in African swine fever virus (strain Badajoz 1971 Vero-adapted) (Ba71V).